The following is a 331-amino-acid chain: UPF0194 membrane protein YbhG (331 aa).

A signal peptide spans 1–19 (MKKPVVIGLAIAAIVAVIA). Positions 107-208 (EEIAQAAAAV…LDLQDTTLIA (102 aa)) form a coiled coil.

The protein belongs to the UPF0194 family.

Its subcellular location is the periplasm. This Salmonella gallinarum (strain 287/91 / NCTC 13346) protein is UPF0194 membrane protein YbhG.